Consider the following 90-residue polypeptide: U7-theraphotoxin-Hhn1i (90 aa).

Residues 1 to 19 (MKTAIFTVVLALAVFAVLS) form the signal peptide. A propeptide spanning residues 20 to 50 (FGWEANEKALSEEFTELIHEKEAASETEARE) is cleaved from the precursor. Intrachain disulfides connect Cys51–Cys65, Cys58–Cys70, and Cys64–Cys81.

The protein belongs to the neurotoxin 10 (Hwtx-1) family. 13 (Hntx-13) subfamily. As to expression, expressed by the venom gland.

The protein resides in the secreted. Its function is as follows. Ion channel inhibitor. The polypeptide is U7-theraphotoxin-Hhn1i (Cyriopagopus hainanus (Chinese bird spider)).